Consider the following 1622-residue polypeptide: DNA (cytosine-5)-methyltransferase 1 (1622 aa).

The segment at 1–145 (MPARTAPARV…RRSKSDSETM (145 aa)) is interaction with DNMT3A. Interaction with the PRC2/EED-EZH2 complex stretches follow at residues 1 to 342 (MPAR…VERK) and 304 to 610 (TPEP…TVIN). The residue at position 15 (S15) is a Phosphoserine. One can recognise a DMAP1-binding domain in the interval 16–109 (PAGSLPDHVR…TQKANGCPAN (94 aa)). An N6,N6-dimethyllysine; by EHMT2 modification is found at K70. The tract at residues 100–360 (TQKANGCPAN…IPKLNPPQCP (261 aa)) is disordered. Over residues 126 to 137 (PRSRPKPRGPRR) the composition is skewed to basic residues. A Phosphoserine modification is found at S138. K139 carries the N6-methyllysine; by SETD7 modification. S140 carries the post-translational modification Phosphoserine; by PKB/AKT1. An interaction with DNMT3B region spans residues 146 to 213 (IEASSSSVAT…TESRASRAGE (68 aa)). Phosphoserine is present on residues S149 and S151. A compositionally biased stretch (low complexity) spans 149 to 166 (SSSSVATRRTTRQTTITS). Position 163 is a phosphothreonine (T163). The residue at position 169 (K169) is an N6-acetyllysine. A Nuclear localization signal motif is present at residues 173–200 (KRKPKEDSEKGNANESAAEERDQDKKRR). Composition is skewed to basic and acidic residues over residues 176–197 (PKEDSEKGNANESAAEERDQDK), 207–222 (RASRAGESVEKPERVR), 237–269 (DDRRPRRQTRELASRRKSREDPDREARPGTHLD), and 276–300 (KDKRSSRPRSQPRDLATKRRPKEEV). Phosphothreonine is present on T304. The segment at 327 to 556 (KPEPLSIPVQ…NVNRFTEDSL (230 aa)) is DNA replication foci-targeting sequence. Zn(2+)-binding residues include C359 and C362. K372 is subject to N6-acetyllysine. A Phosphoserine modification is found at S400. 2 residues coordinate Zn(2+): C420 and H424. Phosphoserine occurs at positions 515 and 555. The CXXC-type zinc-finger motif lies at 650–696 (NTMKRRRCGVCEVCQQPECGKCKACKDMVKFGGTGRSKQACLKRRCP). The Zn(2+) site is built by C657, C660, C663, C668, C671, C674, C690, and C695. The autoinhibitory linker stretch occupies residues 697-758 (NLAVKEADED…TYYWKVSIDE (62 aa)). Residues 702–733 (EADEDEEADDDIPELPSPKKLHQGKKKKQNKD) are disordered. Over residues 703-714 (ADEDEEADDDIP) the composition is skewed to acidic residues. S718 is subject to Phosphoserine. The span at 720-731 (KKLHQGKKKKQN) shows a compositional bias: basic residues. A Phosphoserine modification is found at S736. An N6-acetyllysine modification is found at K753. A BAH 1 domain is found at 759–884 (ETLEVGDCVS…QDYARFESPP (126 aa)). Phosphoserine is present on S882. K895, K961, and K980 each carry N6-acetyllysine. A BAH 2 domain is found at 977–1105 (TYRKYSDYIK…SKTKSFEDPP (129 aa)). Residues 1099–1138 (KSFEDPPNHARSPGNKGKGKGKGKGKGKPQVSEPKEPEAA) are disordered. Repeat copies occupy residues 1114 to 1115 (KG), 1116 to 1117 (KG), 1118 to 1119 (KG), 1120 to 1121 (KG), 1122 to 1123 (KG), and 1124 to 1125 (KG). The tract at residues 1114 to 1127 (KGKGKGKGKGKGKP) is 7 X 2 AA tandem repeats of K-G. Positions 1115-1125 (GKGKGKGKGKG) are enriched in basic residues. N6-acetyllysine occurs at positions 1116, 1118, 1120, 1122, 1124, and 1126. One copy of the 7; approximate repeat lies at 1126 to 1127 (KP). The interval 1126-1622 (KPQVSEPKEP…KGKEETTTED (497 aa)) is interaction with the PRC2/EED-EZH2 complex. The region spanning 1144-1603 (LRTLDVFSGC…LEIKLCLLAS (460 aa)) is the SAM-dependent MTase C5-type domain. The catalytic stretch occupies residues 1144–1622 (LRTLDVFSGC…KGKEETTTED (479 aa)). S-adenosyl-L-methionine contacts are provided by residues S1151, 1155–1156 (GL), 1173–1174 (EM), 1195–1196 (DC), and C1196. Residue C1231 is part of the active site. K1354 carries the N6-acetyllysine modification. Position 1436 is a phosphoserine (S1436). S-adenosyl-L-methionine contacts are provided by N1582 and V1584. K1613 participates in a covalent cross-link: Glycyl lysine isopeptide (Lys-Gly) (interchain with G-Cter in SUMO2).

This sequence belongs to the class I-like SAM-binding methyltransferase superfamily. C5-methyltransferase family. In terms of assembly, homodimer. Forms a stable complex with E2F1, BB1 and HDAC1. Forms a complex with DMAP1 and HDAC2, with direct interaction. Interacts with the PRC2/EED-EZH2 complex. Probably part of a corepressor complex containing ZNF304, TRIM28, SETDB1 and DNMT1. Interacts with UHRF1; promoting its recruitment to hemimethylated DNA. Interacts with USP7, promoting its deubiquitination. Interacts with PCNA. Interacts with MBD2 and MBD3. Interacts with DNMT3A and DNMT3B. Interacts with UBC9. Interacts with CSNK1D. Interacts with HDAC1. Interacts with BAZ2A/TIP5. Interacts with SIRT7. Interacts with ZNF263; recruited to the SIX3 promoter along with other proteins involved in chromatin modification and transcriptional corepression where it contributes to transcriptional repression. Interacts with L3MBTL3 and DCAF5; the interaction requires DNMT1 methylation at Lys-139 and is necessary to target DNMT1 for ubiquitination by the CRL4-DCAF5 E3 ubiquitin ligase complex and proteasomal degradation. Interacts with PHF20L1; the interaction requires DNMT1 methylation at Lys-139 and protects DNMT1 from ubiquitination and proteasomal degradation. In terms of processing, sumoylated; sumoylation increases activity. Post-translationally, acetylation on multiple lysines, mainly by KAT2B/PCAF, regulates cell cycle G(2)/M transition. Deacetylation of Lys-1116 and Lys-1354 by SIRT1 increases methyltransferase activity. Phosphorylation of Ser-151 by CDKs is important for enzymatic activity and protein stability. Phosphorylation of Ser-140 by AKT1 prevents methylation by SETD7 thereby increasing DNMT1 stability. In terms of processing, methylation at Lys-139 by SETD7 is necessary for the regulation of DNMT1 proteasomal degradation. Post-translationally, ubiquitinated by UHRF1; interaction with USP7 counteracts ubiquitination by UHRF1 by promoting deubiquitination and preventing degradation by the proteasome. In terms of tissue distribution, isoforms 0 and 8 are highly expressed in placenta, brain, lung, spleen, kidney, heart, and at much lower levels in liver. Isoform 1 is expressed in cerebellum, isoform 2 in muscle and testis, isoform 3 in lung, isoform 4 in spleen and brain, and isoform 5 in brain.

The protein resides in the nucleus. The catalysed reaction is a 2'-deoxycytidine in DNA + S-adenosyl-L-methionine = a 5-methyl-2'-deoxycytidine in DNA + S-adenosyl-L-homocysteine + H(+). Functionally, methylates CpG residues. Preferentially methylates hemimethylated DNA. Associates with DNA replication sites in S phase maintaining the methylation pattern in the newly synthesized strand, that is essential for epigenetic inheritance. Associates with chromatin during G2 and M phases to maintain DNA methylation independently of replication. It is responsible for maintaining methylation patterns established in development. DNA methylation is coordinated with methylation of histones. Mediates transcriptional repression by direct binding to HDAC2. In association with DNMT3B and via the recruitment of CTCFL/BORIS, involved in activation of BAG1 gene expression by modulating dimethylation of promoter histone H3 at H3K4 and H3K9. Probably forms a corepressor complex required for activated KRAS-mediated promoter hypermethylation and transcriptional silencing of tumor suppressor genes (TSGs) or other tumor-related genes in colorectal cancer (CRC) cells. Also required to maintain a transcriptionally repressive state of genes in undifferentiated embryonic stem cells (ESCs). Associates at promoter regions of tumor suppressor genes (TSGs) leading to their gene silencing. Promotes tumor growth. The protein is DNA (cytosine-5)-methyltransferase 1 (Dnmt1) of Rattus norvegicus (Rat).